Reading from the N-terminus, the 133-residue chain is Ribosome-binding factor A (133 aa).

Belongs to the RbfA family. In terms of assembly, monomer. Binds 30S ribosomal subunits, but not 50S ribosomal subunits or 70S ribosomes.

The protein resides in the cytoplasm. In terms of biological role, one of several proteins that assist in the late maturation steps of the functional core of the 30S ribosomal subunit. Associates with free 30S ribosomal subunits (but not with 30S subunits that are part of 70S ribosomes or polysomes). Required for efficient processing of 16S rRNA. May interact with the 5'-terminal helix region of 16S rRNA. The sequence is that of Ribosome-binding factor A from Acinetobacter baumannii (strain AB307-0294).